The primary structure comprises 535 residues: F-box protein At1g56610 (535 aa).

Helical transmembrane passes span 3–23, 37–57, and 82–102; these read FALV…SSSI, VLLL…LCLF, and LAPH…SLLF. Residues 73 to 119 form the F-box; degenerate domain; it reads TELCDLPKCLAPHILSWLPTKTAVTVSLLFMKGWWRSEMKNLSSLKF.

As to quaternary structure, part of a SCF (ASK-cullin-F-box) protein ligase complex. Interacts with ASK4.

The protein localises to the membrane. It functions in the pathway protein modification; protein ubiquitination. Component of SCF(ASK-cullin-F-box) E3 ubiquitin ligase complexes, which may mediate the ubiquitination and subsequent proteasomal degradation of target proteins. The sequence is that of F-box protein At1g56610 from Arabidopsis thaliana (Mouse-ear cress).